The sequence spans 400 residues: Delta(12) fatty acid desaturase (400 aa).

A helical transmembrane segment spans residues 91 to 111; that stretch reads LAWPAYWIMQGIVCTGIWVLA. The Histidine box-1 motif lies at 112–116; it reads HECGH. Positions 148–152 match the Histidine box-2 motif; sequence HSKHH. 3 helical membrane-spanning segments follow: residues 199 to 219, 245 to 265, and 277 to 297; these read IVTL…YLIM, FFDI…LIYA, and YYIV…FLQH. A Histidine box-3 motif is present at residues 339–343; the sequence is HVAHH.

It belongs to the fatty acid desaturase type 1 family.

Its subcellular location is the membrane. The catalysed reaction is (9Z)-octadecenoyl-CoA + 2 Fe(II)-[cytochrome b5] + O2 + 2 H(+) = (9Z,12Z)-octadecadienoyl-CoA + 2 Fe(III)-[cytochrome b5] + 2 H2O. It carries out the reaction (9Z)-hexadecenoyl-CoA + 2 Fe(II)-[cytochrome b5] + O2 + 2 H(+) = (9Z,12Z)-hexadecadienoyl-CoA + 2 Fe(III)-[cytochrome b5] + 2 H2O. It functions in the pathway lipid metabolism; polyunsaturated fatty acid biosynthesis. Catalyzes the desaturation of oleic acid (Delta(9)-18:1) to linoleic acid (Delta(9), Delta(12)-18:2). In Mortierella alpina (Oleaginous fungus), this protein is Delta(12) fatty acid desaturase.